Here is a 649-residue protein sequence, read N- to C-terminus: Endoplasmic reticulum membrane protein 65 (649 aa).

Positions 1 to 55 (MGSNTSPGQADPLESENESSLTSRFLPNKRDGGKDNESVIPEKEEPDLNEPVLAV) are disordered. The Cytoplasmic portion of the chain corresponds to 1–165 (MGSNTSPGQA…LATPYAIEKT (165 aa)). Positions 28–43 (NKRDGGKDNESVIPEK) are enriched in basic and acidic residues. Position 94 is a phosphoserine (Ser94). Residues 166-186 (FLFGWFVSVDSFLYIFTLFPI) form a helical membrane-spanning segment. The Lumenal segment spans residues 187 to 302 (RVLISFFTLS…NFWNPAGWMT (116 aa)). Residue Asn215 is glycosylated (N-linked (GlcNAc...) asparagine). A helical transmembrane segment spans residues 303 to 323 (FFYYFAISLAYMVLHTLVLLY). At 324-366 (QIITLNVTVNSYSNAVLALLMSNQLVEIKGAVFKKFEKENLFQ) the chain is on the cytoplasmic side. A helical transmembrane segment spans residues 367–387 (LTCSDVVERFQITIMVIIIFL). At 388 to 414 (RNLAELYTTSSLDQPLLTFKRLKTLLA) the chain is on the lumenal side. Residues 415–435 (PFFWVIGSELFVDWLKHAFII) form a helical membrane-spanning segment. Topologically, residues 436-479 (KFNYIKPSIYSRFTDVLCHDYVASGAQLTQTVTGCSQQVARRMG) are cytoplasmic. Residues 480–500 (LPVLPLVCVFIRTSMQTWSMF) form a helical membrane-spanning segment. At 501–557 (RSTHSMKQEIAKSIGTIFPTKDNYVYYLPNKEANTYNAGKEASWETLLLSVVRGKSG) the chain is on the lumenal side. A helical membrane pass occupies residues 558–578 (IAFLFFMAIMLKLLLGKAILA). The Cytoplasmic portion of the chain corresponds to 579–649 (ITQSRYESMQ…RYAMHSKRIW (71 aa)).

It belongs to the TAPT1 family. Interacts with slp1.

The protein localises to the endoplasmic reticulum membrane. Functionally, may be involved in membrane protein folding. This Schizosaccharomyces pombe (strain 972 / ATCC 24843) (Fission yeast) protein is Endoplasmic reticulum membrane protein 65.